The following is a 673-amino-acid chain: Armadillo repeat-containing protein 8 (673 aa).

N-acetylalanine is present on alanine 2. ARM repeat units follow at residues 51–92 (NKQK…SLAM), 95–134 (ENNV…TIFT), 138–176 (TPEE…HCCK), 178–217 (PDHQ…VLAF), 224–265 (MTLV…YMCR), 269–309 (IRTD…YLIE), 313–352 (ELQR…HDLK), 374–413 (DIRK…SLSR), 416–455 (QQLR…NLLL), 458–497 (SPSK…NMAF), 501–540 (QKIK…NLLS), 543–585 (PHID…NIAD), 588–627 (TAKE…NLTW), and 634–673 (QERQ…QYLA). Position 337 is a phosphoserine (serine 337). A Phosphoserine modification is found at serine 512.

Identified in the CTLH complex that contains GID4, RANBP9 and/or RANBP10, MKLN1, MAEA, RMND5A (or alternatively its paralog RMND5B), GID8, ARMC8, WDR26 and YPEL5. Within this complex, MAEA, RMND5A (or alternatively its paralog RMND5B), GID8, WDR26, and RANBP9 and/or RANBP10 form the catalytic core, while GID4, MKLN1, ARMC8 and YPEL5 have ancillary roles.

Its subcellular location is the nucleus. The protein resides in the cytoplasm. Component of the CTLH E3 ubiquitin-protein ligase complex that selectively accepts ubiquitin from UBE2H and mediates ubiquitination and subsequent proteasomal degradation of the transcription factor HBP1. This chain is Armadillo repeat-containing protein 8 (Armc8), found in Mus musculus (Mouse).